The sequence spans 259 residues: MIQIHALPAFNDNYIWLLQDLSSQQCAVVDPGDAKPVLGWLTEHPDYRLTDILITHHHNDHVGGVAELKQATRARVLGPAAETIPARDVALVDHDRLTVLGLEFVVHAVPGHTLGHIAFYHEDATTPLLFSGDTLFAAGCGRLFEGTPEQMHDSLERLAKLPDSTLIYCAHEYTLSNLRFAQAVEPDNQDIAQRLAEVIRWRSENRISLPSNLALEKRTNPFLRTRETSVKEKADERSSGQNTSQSAVFASLRAWKDKF.

The Zn(2+) site is built by His56, His58, Asp60, His61, His112, Asp133, and His171. The segment covering 224–238 has biased composition (basic and acidic residues); the sequence is RTRETSVKEKADERS. The disordered stretch occupies residues 224–245; that stretch reads RTRETSVKEKADERSSGQNTSQ.

This sequence belongs to the metallo-beta-lactamase superfamily. Glyoxalase II family. Monomer. Zn(2+) serves as cofactor.

It catalyses the reaction an S-(2-hydroxyacyl)glutathione + H2O = a 2-hydroxy carboxylate + glutathione + H(+). It functions in the pathway secondary metabolite metabolism; methylglyoxal degradation; (R)-lactate from methylglyoxal: step 2/2. Functionally, thiolesterase that catalyzes the hydrolysis of S-D-lactoyl-glutathione to form glutathione and D-lactic acid. This chain is Hydroxyacylglutathione hydrolase, found in Pseudomonas savastanoi pv. phaseolicola (strain 1448A / Race 6) (Pseudomonas syringae pv. phaseolicola (strain 1448A / Race 6)).